The chain runs to 252 residues: Floral homeotic protein AGAMOUS (252 aa).

The interval 1-20 is disordered; that stretch reads MAYQSELGGDSSPLRKSGRG. Residues 19–73 form the MADS-box domain; the sequence is RGKIEIKRIENTTNRQVTFCKRRNGLLKKAYELSVLCDAEVALIVFSSRGRLYEY. Positions 99–166 form a coiled coil; sequence AEINAQYYQQ…KKNELLFSEI (68 aa). Residues 103–193 form the K-box domain; sequence AQYYQQESAK…RAKIAENERN (91 aa).

In terms of assembly, homodimer, capable of binding to CArG-box sequences. Forms a heterodimer via the K-box domain with either SEPALATTA1/AGL2, SEPALATTA2/AGL4, SEPALLATA3/AGL9 or AGL6. Heterodimerization also seen with some other Agamous-like MADS-box proteins. Interacts with AGL15 and AGL16. Component of a complex made of FLOR1, VSP1 and AGAMOUS (AG). Binds directly with FLR1. Detected early in the floral meristem but mostly expressed in stamen and carpel primordia.

The protein resides in the nucleus. Functionally, probable transcription factor involved in the control of organ identity during the early development of flowers. Is required for normal development of stamens and carpels in the wild-type flower. Plays a role in maintaining the determinacy of the floral meristem. Acts as C class cadastral protein by repressing the A class floral homeotic genes like APETALA1. Forms a heterodimer via the K-box domain with either SEPALATTA1/AGL2, SEPALATTA2/AGL4, SEPALLATA3/AGL9 or AGL6 that could be involved in genes regulation during floral meristem development. Controls AHL21/GIK, a multifunctional chromatin modifier in reproductive organ patterning and differentiation. Induces microsporogenesis through the activation of SPL/NZZ. This is Floral homeotic protein AGAMOUS (AG) from Arabidopsis thaliana (Mouse-ear cress).